Reading from the N-terminus, the 379-residue chain is L-lactate dehydrogenase (379 aa).

The 379-residue stretch at 1-379 (MIISASTDYR…ITSDLLVKER (379 aa)) folds into the FMN hydroxy acid dehydrogenase domain. Tyr-24 contacts substrate. Positions 106 and 127 each coordinate FMN. Tyr-129 lines the substrate pocket. Thr-155 lines the FMN pocket. Residue Arg-164 participates in substrate binding. Position 251 (Lys-251) interacts with FMN. The active-site Proton acceptor is His-275. A substrate-binding site is contributed by Arg-278. FMN is bound at residue 306-330 (DSGIRTGLDVVRMLALGADTVLLGR).

It belongs to the FMN-dependent alpha-hydroxy acid dehydrogenase family. Homotetramer. The cofactor is FMN.

It localises to the cell inner membrane. The catalysed reaction is (S)-lactate + A = pyruvate + AH2. Its function is as follows. Catalyzes the conversion of L-lactate to pyruvate. Is coupled to the respiratory chain. In Ectopseudomonas mendocina (strain ymp) (Pseudomonas mendocina), this protein is L-lactate dehydrogenase.